Here is a 268-residue protein sequence, read N- to C-terminus: Protein CONTINUOUS VASCULAR RING 1 (268 aa).

At 1-70 the chain is on the cytoplasmic side; sequence MGDEKPVIVM…GWASKKFMTG (70 aa). Positions 21–48 are disordered; the sequence is IPVADSGDKDDGSSSKPSSSSSASSSSH. A compositionally biased stretch (low complexity) spans 34 to 48; the sequence is SSKPSSSSSASSSSH. The chain crosses the membrane as a helical span at residues 71–91; the sequence is CVILLPIAITFYITWWFIHFV. The Extracellular portion of the chain corresponds to 92–103; that stretch reads DGFFSPIYAQLG. The helical transmembrane segment at 104 to 124 threads the bilayer; it reads INVFGFGFLTSIAFIFLVGVF. Over 125 to 268 the chain is Cytoplasmic; it reads MSSWLGASVL…LASIDRATSL (144 aa).

Belongs to the plant COV1 protein family. As to expression, mostly expressed in flowers and stems, and, to a lower extent, in roots and leaves.

The protein resides in the membrane. In terms of biological role, involved in the regulation of vascular patterning in the stem, probably by negatively regulating the differentiation of vascular tissue. This is Protein CONTINUOUS VASCULAR RING 1 from Arabidopsis thaliana (Mouse-ear cress).